The following is a 320-amino-acid chain: Heptaprenyl diphosphate synthase component 2 (320 aa).

Isopentenyl diphosphate is bound by residues K45, R48, and H77. Positions 84 and 88 each coordinate Mg(2+). R93 contributes to the all-trans-hexaprenyl diphosphate binding site. Residue R94 participates in isopentenyl diphosphate binding. Positions 170, 171, and 208 each coordinate all-trans-hexaprenyl diphosphate.

This sequence belongs to the FPP/GGPP synthase family. In terms of assembly, heterodimer of component I and II. Requires Mg(2+) as cofactor.

The enzyme catalyses 4 isopentenyl diphosphate + (2E,6E)-farnesyl diphosphate = all-trans-heptaprenyl diphosphate + 4 diphosphate. Supplies heptaprenyl diphosphate, the precursor for the side chain of the isoprenoid quinone menaquinone-7 (MQ-7). This Geobacillus stearothermophilus (Bacillus stearothermophilus) protein is Heptaprenyl diphosphate synthase component 2 (hepT).